The following is a 68-amino-acid chain: Peptide TsPep3 (68 aa).

A signal peptide spans 1 to 26 (MKLSCGFLLIFLVLSAMIATFSEVEA). Disulfide bonds link Cys30–Cys38, Cys33–Cys54, Cys37–Cys47, and Cys42–Cys52. Residues 56-68 (GRSDLNEEFENYQ) constitute a propeptide that is removed on maturation.

Expressed by the venom gland.

The protein resides in the secreted. Its function is as follows. Probable weak potassium channel blocker. This is Peptide TsPep3 from Tityus serrulatus (Brazilian scorpion).